The sequence spans 423 residues: Histidine--tRNA ligase 2 (423 aa).

It belongs to the class-II aminoacyl-tRNA synthetase family. As to quaternary structure, homodimer.

It is found in the cytoplasm. It catalyses the reaction tRNA(His) + L-histidine + ATP = L-histidyl-tRNA(His) + AMP + diphosphate + H(+). This chain is Histidine--tRNA ligase 2, found in Bacillus cereus (strain ATCC 14579 / DSM 31 / CCUG 7414 / JCM 2152 / NBRC 15305 / NCIMB 9373 / NCTC 2599 / NRRL B-3711).